Here is a 121-residue protein sequence, read N- to C-terminus: Probable intron-encoded DNA endonuclease aI1 (121 aa).

This sequence belongs to the LAGLIDADG endonuclease family.

It localises to the mitochondrion. Mitochondrial DNA endonuclease involved in intron homing. The protein is Probable intron-encoded DNA endonuclease aI1 (aI1) of Mycosarcoma maydis (Corn smut fungus).